An 861-amino-acid chain; its full sequence is Glucans biosynthesis glucosyltransferase H (861 aa).

A run of 6 helical transmembrane segments spans residues 142–162 (FILL…MKGI), 188–208 (VLPY…FCWV), 516–536 (VFLT…FLVL), 573–593 (LFST…MLIW), 600–620 (FGGV…SVLL), and 683–703 (FLWW…VSVI).

Belongs to the glycosyltransferase 2 family. OpgH subfamily.

It localises to the cell inner membrane. Its pathway is glycan metabolism; osmoregulated periplasmic glucan (OPG) biosynthesis. In terms of biological role, involved in the biosynthesis of osmoregulated periplasmic glucans (OPGs). The protein is Glucans biosynthesis glucosyltransferase H of Pseudomonas aeruginosa (strain LESB58).